Consider the following 247-residue polypeptide: GTP cyclohydrolase 1 type 2 homolog (247 aa).

His-63, His-64, Asp-101, His-215, and Glu-219 together coordinate a divalent metal cation.

This sequence belongs to the GTP cyclohydrolase I type 2/NIF3 family. Homohexamer.

This Buchnera aphidicola subsp. Acyrthosiphon pisum (strain APS) (Acyrthosiphon pisum symbiotic bacterium) protein is GTP cyclohydrolase 1 type 2 homolog.